Reading from the N-terminus, the 205-residue chain is Thiamine-phosphate synthase (205 aa).

4-amino-2-methyl-5-(diphosphooxymethyl)pyrimidine-binding positions include 34–38 (QLRCK) and Asn66. Residues Asp67 and Asp86 each coordinate Mg(2+). 4-amino-2-methyl-5-(diphosphooxymethyl)pyrimidine is bound at residue Ser105. 131-133 (TTT) lines the 2-[(2R,5Z)-2-carboxy-4-methylthiazol-5(2H)-ylidene]ethyl phosphate pocket. Lys134 serves as a coordination point for 4-amino-2-methyl-5-(diphosphooxymethyl)pyrimidine. Gly163 lines the 2-[(2R,5Z)-2-carboxy-4-methylthiazol-5(2H)-ylidene]ethyl phosphate pocket.

It belongs to the thiamine-phosphate synthase family. It depends on Mg(2+) as a cofactor.

It catalyses the reaction 2-[(2R,5Z)-2-carboxy-4-methylthiazol-5(2H)-ylidene]ethyl phosphate + 4-amino-2-methyl-5-(diphosphooxymethyl)pyrimidine + 2 H(+) = thiamine phosphate + CO2 + diphosphate. The catalysed reaction is 2-(2-carboxy-4-methylthiazol-5-yl)ethyl phosphate + 4-amino-2-methyl-5-(diphosphooxymethyl)pyrimidine + 2 H(+) = thiamine phosphate + CO2 + diphosphate. It carries out the reaction 4-methyl-5-(2-phosphooxyethyl)-thiazole + 4-amino-2-methyl-5-(diphosphooxymethyl)pyrimidine + H(+) = thiamine phosphate + diphosphate. Its pathway is cofactor biosynthesis; thiamine diphosphate biosynthesis; thiamine phosphate from 4-amino-2-methyl-5-diphosphomethylpyrimidine and 4-methyl-5-(2-phosphoethyl)-thiazole: step 1/1. Its function is as follows. Condenses 4-methyl-5-(beta-hydroxyethyl)thiazole monophosphate (THZ-P) and 2-methyl-4-amino-5-hydroxymethyl pyrimidine pyrophosphate (HMP-PP) to form thiamine monophosphate (TMP). The sequence is that of Thiamine-phosphate synthase from Neisseria meningitidis serogroup B (strain ATCC BAA-335 / MC58).